The primary structure comprises 266 residues: Phosphatidate cytidylyltransferase (266 aa).

Helical transmembrane passes span 16-36 (VVLI…LFWA), 52-72 (LFQV…WVAA), 78-98 (PVEC…YQKA), 101-121 (SEAI…FGVY), 125-145 (GAVA…GAFF), 164-184 (LEGA…VGMG), 186-206 (LSGG…MAVF), and 237-257 (LDSM…LEIW).

Belongs to the CDS family.

The protein resides in the cell inner membrane. It carries out the reaction a 1,2-diacyl-sn-glycero-3-phosphate + CTP + H(+) = a CDP-1,2-diacyl-sn-glycerol + diphosphate. It functions in the pathway phospholipid metabolism; CDP-diacylglycerol biosynthesis; CDP-diacylglycerol from sn-glycerol 3-phosphate: step 3/3. This chain is Phosphatidate cytidylyltransferase (cdsA), found in Helicobacter pylori (strain J99 / ATCC 700824) (Campylobacter pylori J99).